An 89-amino-acid chain; its full sequence is Pigment-dispersing hormone peptides (89 aa).

Residues 1 to 22 (MTAMAVSGKLLTALVLSTYILG) form the signal peptide. Alanine amide is present on Ala86.

The protein belongs to the arthropod PDH family.

Its subcellular location is the secreted. Its function is as follows. Capable of inducing pigment dispersion in the chromatophores of the fiddler crab Uca pugilator. The chain is Pigment-dispersing hormone peptides from Romalea microptera (Eastern lubber grasshopper).